Here is a 30-residue protein sequence, read N- to C-terminus: Cyclotide hyen-L (30 aa).

The cyclopeptide (Gly-Asn) cross-link spans 1 to 30 (GIPCAESCVYIPCTVTALLGCSCSDKVCYN). 3 disulfide bridges follow: Cys4/Cys21, Cys8/Cys23, and Cys13/Cys28.

Post-translationally, this is a cyclic peptide. As to expression, detected in stems (at protein level).

Its function is as follows. Probably participates in a plant defense mechanism. Has cytotoxic activity against HUVEC cells (LC(50)= 2.26 uM) and various cancer cells including HeLa (LC(50)= 3.48 uM), MCF-7 and K562. Displays very weak hemolytic activity. Binds to and induces leakage in phospholipd membranes, particularly ones containing 1-palmitoyl-2-oleophosphatidylethanolamine (POPE). The polypeptide is Cyclotide hyen-L (Pigea enneasperma (Spade flower)).